The sequence spans 437 residues: Type II methyltransferase M.HgiCII (437 aa).

Residues 4–431 (FRFIDLFAGI…KALPNDHLFE (428 aa)) enclose the SAM-dependent MTase C5-type domain. The active site involves Cys75.

The protein belongs to the class I-like SAM-binding methyltransferase superfamily. C5-methyltransferase family.

The catalysed reaction is a 2'-deoxycytidine in DNA + S-adenosyl-L-methionine = a 5-methyl-2'-deoxycytidine in DNA + S-adenosyl-L-homocysteine + H(+). Its function is as follows. A methylase that recognizes the double-stranded sequence 5'-GGWCC-3', methylates C-? on both strands and protects the DNA from cleavage by the HgiCII endonuclease. In Herpetosiphon aurantiacus (Herpetosiphon giganteus), this protein is Type II methyltransferase M.HgiCII.